Reading from the N-terminus, the 383-residue chain is tRNA-specific 2-thiouridylase MnmA (383 aa).

ATP-binding positions include 30-37 (GMSGGVDS) and M56. Positions 116–118 (NPD) are interaction with target base in tRNA. Residue C121 is the Nucleophile of the active site. C121 and C218 are disulfide-bonded. G146 serves as a coordination point for ATP. The segment at 168–170 (KDQ) is interaction with tRNA. Residue C218 is the Cysteine persulfide intermediate of the active site. The interval 330–331 (RY) is interaction with tRNA.

It belongs to the MnmA/TRMU family.

The protein localises to the cytoplasm. The enzyme catalyses S-sulfanyl-L-cysteinyl-[protein] + uridine(34) in tRNA + AH2 + ATP = 2-thiouridine(34) in tRNA + L-cysteinyl-[protein] + A + AMP + diphosphate + H(+). Functionally, catalyzes the 2-thiolation of uridine at the wobble position (U34) of tRNA, leading to the formation of s(2)U34. This Haemophilus influenzae (strain 86-028NP) protein is tRNA-specific 2-thiouridylase MnmA.